Here is a 546-residue protein sequence, read N- to C-terminus: DNA replication factor Cdt1 (546 aa).

Basic and acidic residues predominate over residues 1–11 (MEQRRVTDFFA). Residues 1-23 (MEQRRVTDFFARRRPGPPRIAPP) carry the PIP-box K+4 motif motif. Disordered stretches follow at residues 1-118 (MEQR…QDQD) and 143-165 (SAQD…PCGE). The span at 28-45 (RTPSPARPALRAPASATS) shows a compositional bias: low complexity. At Thr29 the chain carries Phosphothreonine; by MAPK8. Position 31 is a phosphoserine (Ser31). Positions 68 to 70 (RRL) match the Cyclin-binding motif motif. Ser93 carries the post-translational modification Phosphoserine; by MAPK8. An interaction with GMNN region spans residues 150-190 (SCTPEAEGRPEEPCGEKAPAYQRFHALAQPGLPGLVLPYKY). Residues 155–164 (AEGRPEEPCG) are compositionally biased toward basic and acidic residues. A Phosphoserine; by MAPK8 modification is found at Ser318. A phosphoserine mark is found at Ser380 and Ser394. The segment at 383–415 (ALRSAAPSSPGSPRPALPATPPATPPAASPSAL) is disordered. Over residues 392–410 (PGSPRPALPATPPATPPAA) the composition is skewed to pro residues. Residues 451–546 (LERLPELARV…AHQTRAEEGL (96 aa)) are interaction with LRWD1.

It belongs to the Cdt1 family. In terms of assembly, interacts with GMNN; the interaction inhibits binding of the MCM complex to origins of replication. Interacts with MCM6. Interacts with CDC6; are mutually dependent on one another for loading MCM complexes onto chromatin. Interacts with PCNA. Interacts with LRWD1 during G1 phase and during mitosis. Interacts with NDC80 subunit of the NDC80 complex; leading to kinetochore localization. Interacts with GRWD1; origin binding of GRWD1 is dependent on CDT1. Interacts with KAT7. Interacts with ubiquitin-binding protein FAF1; the interaction is likely to promote CDT1 degradation. Post-translationally, two independent E3 ubiquitin ligase complexes, SCF(SKP2) and the DCX(DTL) complex, mediated CDT1 degradation in S phase. Ubiquitinated by the DCX(DTL) complex, in response to DNA damage, leading to its degradation. Ubiquitination by the DCX(DTL) complex is necessary to ensure proper cell cycle regulation and is PCNA-dependent: interacts with PCNA via its PIP-box, while the presence of the containing the 'K+4' motif in the PIP box, recruit the DCX(DTL) complex, leading to its degradation. Phosphorylation at Thr-29 by CDK2 targets CDT1 for ubiquitination by SCF(SKP2) E3 ubiquitin ligase and subsequent degradation. The interaction with GMNN protects it against ubiquitination. Deubiquitinated by USP37. Ubiquitinated and degraded by the SCF(FBXO31) complex during the G2 phase to prevent re-replication. In terms of processing, phosphorylation by cyclin A-dependent kinases at Thr-29 targets CDT1 for ubiquitynation by SCF(SKP2) E3 ubiquitin ligase and subsequent degradation. Phosphorylated at Thr-29 by MAPK8/JNK1, which blocks replication licensing in response to stress. Binding to GMNN is not affected by phosphorylation.

The protein resides in the nucleus. It localises to the chromosome. It is found in the centromere. Its subcellular location is the kinetochore. Required for both DNA replication and mitosis. DNA replication licensing factor, required for pre-replication complex assembly. Cooperates with CDC6 and the origin recognition complex (ORC) during G1 phase of the cell cycle to promote the loading of the mini-chromosome maintenance (MCM) complex onto DNA to generate pre-replication complexes (pre-RC). Required also for mitosis by promoting stable kinetochore-microtubule attachments. Potential oncogene. This is DNA replication factor Cdt1 from Homo sapiens (Human).